The sequence spans 78 residues: uncharacterized protein (78 aa).

2 consecutive transmembrane segments (helical) span residues 25 to 45 (IITA…DEVV) and 50 to 70 (KCAD…FVFV).

The protein resides in the membrane. This is an uncharacterized protein from Saccharomyces cerevisiae (strain ATCC 204508 / S288c) (Baker's yeast).